Consider the following 380-residue polypeptide: 2-aminoethylphosphonate--pyruvate transaminase (380 aa).

Lysine 204 is modified (N6-(pyridoxal phosphate)lysine).

It belongs to the class-V pyridoxal-phosphate-dependent aminotransferase family. PhnW subfamily. Homodimer. The cofactor is pyridoxal 5'-phosphate.

It carries out the reaction (2-aminoethyl)phosphonate + pyruvate = phosphonoacetaldehyde + L-alanine. Functionally, involved in phosphonate degradation. This chain is 2-aminoethylphosphonate--pyruvate transaminase, found in Aeromonas hydrophila subsp. hydrophila (strain ATCC 7966 / DSM 30187 / BCRC 13018 / CCUG 14551 / JCM 1027 / KCTC 2358 / NCIMB 9240 / NCTC 8049).